A 156-amino-acid polypeptide reads, in one-letter code: Large ribosomal subunit protein bL9 (156 aa).

The protein belongs to the bacterial ribosomal protein bL9 family.

Its function is as follows. Binds to the 23S rRNA. The protein is Large ribosomal subunit protein bL9 of Treponema pallidum (strain Nichols).